The chain runs to 48 residues: Delta-actitoxin-Bcg1c (48 aa).

Disulfide bonds link Cys4/Cys45, Cys6/Cys35, and Cys28/Cys46.

The protein resides in the secreted. It is found in the nematocyst. In terms of biological role, binds specifically to voltage-gated sodium channels SCN1A/Nav1.1, thereby delaying their inactivation during signal transduction. The protein is Delta-actitoxin-Bcg1c of Bunodosoma cangicum (Sea anemone).